Here is a 286-residue protein sequence, read N- to C-terminus: Cytosolic 5'-nucleotidase 3 (286 aa).

The active-site Nucleophile is aspartate 38. Residues aspartate 38 and aspartate 40 each contribute to the Mg(2+) site. Catalysis depends on aspartate 40, which acts as the Proton donor. Substrate is bound by residues glutamate 85, serine 106, 153–154, and lysine 202; that span reads SA. Aspartate 227 serves as a coordination point for Mg(2+).

Belongs to the pyrimidine 5'-nucleotidase family.

It is found in the cytoplasm. The enzyme catalyses a ribonucleoside 5'-phosphate + H2O = a ribonucleoside + phosphate. Can act both as nucleotidase and as phosphotransferase. The protein is Cytosolic 5'-nucleotidase 3 (nt5c3) of Danio rerio (Zebrafish).